The chain runs to 837 residues: Phenylalanine--tRNA ligase beta subunit (837 aa).

Residues 39–149 form the tRNA-binding domain; sequence SASLEGIVTG…EMNIAIPKIG (111 aa). A B5 domain is found at 415-520; the sequence is IEEQLLLLRR…RLIGYDRFDS (106 aa). Residues Asp498, Asp504, Glu507, and Glu508 each coordinate Mg(2+). The region spanning 743 to 836 is the FDX-ACB domain; the sequence is PTVPSMERDI…LKVEFSAELR (94 aa).

The protein belongs to the phenylalanyl-tRNA synthetase beta subunit family. Type 1 subfamily. Tetramer of two alpha and two beta subunits. Mg(2+) is required as a cofactor.

It localises to the cytoplasm. It catalyses the reaction tRNA(Phe) + L-phenylalanine + ATP = L-phenylalanyl-tRNA(Phe) + AMP + diphosphate + H(+). This is Phenylalanine--tRNA ligase beta subunit from Prochlorococcus marinus (strain SARG / CCMP1375 / SS120).